The following is a 125-amino-acid chain: NADH dehydrogenase [ubiquinone] 1 beta subcomplex subunit 8, mitochondrial (125 aa).

The transit peptide at 1–29 (MAGRLSGVASRIMGGNGVVARSVGSSLRQ) directs the protein to the mitochondrion. Residues 78-98 (ALAWLSGGLGFFVGLGLLAVL) traverse the membrane as a helical segment.

This sequence belongs to the complex I NDUFB8 subunit family. In terms of assembly, complex I is composed of at least 49 different subunits.

Its subcellular location is the mitochondrion inner membrane. Accessory subunit of the mitochondrial membrane respiratory chain NADH dehydrogenase (Complex I), that is believed not to be involved in catalysis. Complex I functions in the transfer of electrons from NADH to the respiratory chain. The immediate electron acceptor for the enzyme is believed to be ubiquinone. The chain is NADH dehydrogenase [ubiquinone] 1 beta subcomplex subunit 8, mitochondrial from Arabidopsis thaliana (Mouse-ear cress).